The chain runs to 143 residues: Transcription antitermination protein NusB (143 aa).

Belongs to the NusB family.

Its function is as follows. Involved in transcription antitermination. Required for transcription of ribosomal RNA (rRNA) genes. Binds specifically to the boxA antiterminator sequence of the ribosomal RNA (rrn) operons. This Buchnera aphidicola subsp. Acyrthosiphon pisum (strain APS) (Acyrthosiphon pisum symbiotic bacterium) protein is Transcription antitermination protein NusB.